Reading from the N-terminus, the 580-residue chain is D-erythrulose kinase (580 aa).

A DhaK domain is found at 7–327 (DPARFTEDML…WAAPADTPAY (321 aa)). The active-site Tele-hemiaminal-histidine intermediate is His-217. The disordered stretch occupies residues 329 to 360 (KGAAQQHVSGERRSEATARSASSGPKLAELSD). The DhaL domain occupies 368 to 570 (RLVARAFDAM…LALCARTVAD (203 aa)). ATP-binding positions include 397 to 403 (DGDHGRG), 443 to 444 (TS), Gly-485, Arg-542, and 555 to 557 (DAG).

The catalysed reaction is D-erythrulose + ATP = D-erythrulose 4-phosphate + ADP + H(+). The protein operates within carbohydrate metabolism; erythritol degradation. It functions in the pathway carbohydrate metabolism; D-threitol degradation. Its function is as follows. Catalyzes the phosphorylation of D-erythrulose to D-erythrulose-4P. Involved in the degradation pathways of erythritol and D-threitol, that allow M.smegmatis to grow on these compounds as the sole carbon source. The sequence is that of D-erythrulose kinase from Mycolicibacterium smegmatis (strain ATCC 700084 / mc(2)155) (Mycobacterium smegmatis).